A 216-amino-acid chain; its full sequence is Small ribosomal subunit protein uS3c (216 aa).

The region spanning 43-118 (INNYVKKNMR…KLNITITRIE (76 aa)) is the KH type-2 domain.

It belongs to the universal ribosomal protein uS3 family. In terms of assembly, part of the 30S ribosomal subunit.

The protein resides in the plastid. The polypeptide is Small ribosomal subunit protein uS3c (rps3) (Cuscuta reflexa (Southern Asian dodder)).